The following is a 233-amino-acid chain: Zinc import ATP-binding protein ZnuC (233 aa).

The 217-residue stretch at 6-222 (IEFHNVSKKF…SDFSNALSSL (217 aa)) folds into the ABC transporter domain. ATP is bound at residue 38-45 (GPNGAGKT).

Belongs to the ABC transporter superfamily. Zinc importer (TC 3.A.1.15.5) family. In terms of assembly, the complex is composed of two ATP-binding proteins (ZnuC), two transmembrane proteins (ZnuB) and a solute-binding protein (ZnuA).

It is found in the cell inner membrane. It catalyses the reaction Zn(2+)(out) + ATP(in) + H2O(in) = Zn(2+)(in) + ADP(in) + phosphate(in) + H(+)(in). In terms of biological role, part of the ABC transporter complex ZnuABC involved in zinc import. Responsible for energy coupling to the transport system. In Rickettsia bellii (strain RML369-C), this protein is Zinc import ATP-binding protein ZnuC.